A 183-amino-acid chain; its full sequence is Glutathione-regulated potassium-efflux system ancillary protein KefG (183 aa).

The protein belongs to the NAD(P)H dehydrogenase (quinone) family. KefG subfamily. Interacts with KefB.

Its subcellular location is the cell inner membrane. It catalyses the reaction a quinone + NADH + H(+) = a quinol + NAD(+). It carries out the reaction a quinone + NADPH + H(+) = a quinol + NADP(+). Regulatory subunit of a potassium efflux system that confers protection against electrophiles. Required for full activity of KefB. The protein is Glutathione-regulated potassium-efflux system ancillary protein KefG of Salmonella paratyphi B (strain ATCC BAA-1250 / SPB7).